The primary structure comprises 39 residues: Pro-opiomelanocortin (39 aa).

S1 is modified (N-acetylserine). At V13 the chain carries Valine amide. S31 bears the Phosphoserine mark.

The protein belongs to the POMC family. In terms of tissue distribution, expressed in the pituitary gland.

The protein resides in the secreted. Functionally, precursor protein for pituitary hormones that regulate stress and environmental adaptation. Its function is as follows. Stimulates the adrenal glands to release cortisol. In terms of biological role, anorexigenic peptide. Increases the pigmentation of skin by increasing melanin production in melanocytes. The chain is Pro-opiomelanocortin (POMC) from Oryctolagus cuniculus (Rabbit).